The chain runs to 571 residues: Proline--tRNA ligase (571 aa).

Belongs to the class-II aminoacyl-tRNA synthetase family. ProS type 1 subfamily. As to quaternary structure, homodimer.

It localises to the cytoplasm. It catalyses the reaction tRNA(Pro) + L-proline + ATP = L-prolyl-tRNA(Pro) + AMP + diphosphate. Its function is as follows. Catalyzes the attachment of proline to tRNA(Pro) in a two-step reaction: proline is first activated by ATP to form Pro-AMP and then transferred to the acceptor end of tRNA(Pro). As ProRS can inadvertently accommodate and process non-cognate amino acids such as alanine and cysteine, to avoid such errors it has two additional distinct editing activities against alanine. One activity is designated as 'pretransfer' editing and involves the tRNA(Pro)-independent hydrolysis of activated Ala-AMP. The other activity is designated 'posttransfer' editing and involves deacylation of mischarged Ala-tRNA(Pro). The misacylated Cys-tRNA(Pro) is not edited by ProRS. The polypeptide is Proline--tRNA ligase (Vibrio vulnificus (strain CMCP6)).